The following is a 469-amino-acid chain: MTRPVRTRFAPSPTGFIHLGNIRSALYPWAFARKMKGTFVLRIEDTDVERSSQEAVDAILEGMQWLGLDFDEGPIYQMQRMDRYREVLAQMLEKGLAYPCYMSAEELDALRERQREAGLKPRYDGTWRPEPGKVLPEPPAGVKPVLRFRNPLTGTVVWDDAVKGRVEISNEELDDLVIARPDGTPIYNFCVVVDDMDMGITHVIRGDDHVNNTPRQINILNALGGEPPVYAHLPTVLNEQGEKMSKRHGAMSVMAYRDAGFLPEAVVNYLARLGWSHGDAEIFSREQFVEWFDLEHLGKSPAQYDHSKLSWLNAHYIKEADNARLAELAKPFLDALGIDDAAIATGPALDAVVGLMKDRATTVKEIAEGAAMFYRVPAPDADALAQHVTDAVRPALADLAAALKAADWTKEAVSAALKATLATHKLKMPQLAMPVRLLVAGTTHTPSIDAVLVLFGRDVVVTRIEAALA.

The 'HIGH' region motif lies at 11–21 (PSPTGFIHLGN). Residues 243–247 (KMSKR) carry the 'KMSKS' region motif. ATP is bound at residue Lys246.

It belongs to the class-I aminoacyl-tRNA synthetase family. Glutamate--tRNA ligase type 1 subfamily. In terms of assembly, monomer.

It is found in the cytoplasm. The enzyme catalyses tRNA(Glu) + L-glutamate + ATP = L-glutamyl-tRNA(Glu) + AMP + diphosphate. Its function is as follows. Catalyzes the attachment of glutamate to tRNA(Glu) in a two-step reaction: glutamate is first activated by ATP to form Glu-AMP and then transferred to the acceptor end of tRNA(Glu). The chain is Glutamate--tRNA ligase from Burkholderia cenocepacia (strain HI2424).